The primary structure comprises 397 residues: MAKQKFERTKPHVNIGTIGHIDHGKTTLTAAITKVLHDAHPDLNPFTPFDQIDKAPEEKARGITISIAHVEYQTDKRHYAHVDCPGHADYIKNMITGAAQMDGAILVVSATDGPMPQTKEHVLLARQVGVPYIVVALNKADMVDDEEILELVELEVRELLSSYEFPGDDVPVIRVSALKALEGDKEWGAKLLELMAAVDDSIPEPQRDIDRPFLMPIEDVFTITGRGTVVTGRVERGIVKVNETVEIVGIKPETTTTTVTGVEMFRKLLDEGRAGDNVGLLLRGIKREDVERGQVIVKPKTITPHTVFEARVYILNKDEGGRHTPFFKNYRPQFYFRTTDVTGVVTLPEGTEMVMPGDNTEMTVELIQPIAMEEGLRFAIREGGRTVGAGQVTKVLK.

The tr-type G domain maps to 10 to 206 (KPHVNIGTIG…AVDDSIPEPQ (197 aa)). Residues 19 to 26 (GHIDHGKT) form a G1 region. 19–26 (GHIDHGKT) contributes to the GTP binding site. Thr-26 is a Mg(2+) binding site. The G2 stretch occupies residues 62-66 (GITIS). The segment at 83–86 (DCPG) is G3. GTP is bound by residues 83–87 (DCPGH) and 138–141 (NKAD). Residues 138–141 (NKAD) are G4. Residues 176–178 (SAL) form a G5 region.

Belongs to the TRAFAC class translation factor GTPase superfamily. Classic translation factor GTPase family. EF-Tu/EF-1A subfamily. In terms of assembly, monomer.

Its subcellular location is the cytoplasm. It catalyses the reaction GTP + H2O = GDP + phosphate + H(+). Functionally, GTP hydrolase that promotes the GTP-dependent binding of aminoacyl-tRNA to the A-site of ribosomes during protein biosynthesis. This Frankia alni (strain DSM 45986 / CECT 9034 / ACN14a) protein is Elongation factor Tu.